A 317-amino-acid polypeptide reads, in one-letter code: tRNA dimethylallyltransferase (317 aa).

14–21 (GPTAVGKT) serves as a coordination point for ATP. Position 16–21 (16–21 (TAVGKT)) interacts with substrate. Residues 39 to 42 (DSMQ) form an interaction with substrate tRNA region.

It belongs to the IPP transferase family. In terms of assembly, monomer. Requires Mg(2+) as cofactor.

The enzyme catalyses adenosine(37) in tRNA + dimethylallyl diphosphate = N(6)-dimethylallyladenosine(37) in tRNA + diphosphate. In terms of biological role, catalyzes the transfer of a dimethylallyl group onto the adenine at position 37 in tRNAs that read codons beginning with uridine, leading to the formation of N6-(dimethylallyl)adenosine (i(6)A). This Bacillus cereus (strain ATCC 14579 / DSM 31 / CCUG 7414 / JCM 2152 / NBRC 15305 / NCIMB 9373 / NCTC 2599 / NRRL B-3711) protein is tRNA dimethylallyltransferase.